The sequence spans 128 residues: uncharacterized protein (128 aa).

Positions 1-50 are disordered; that stretch reads MSNEQGKGMGFFGNKGKPASEKKDEKKTKLDLDYKPDLNPSTPYDPTLPV. Over residues 18–36 the composition is skewed to basic and acidic residues; it reads PASEKKDEKKTKLDLDYKP.

This is an uncharacterized protein from Bacillus anthracis.